The primary structure comprises 159 residues: Ribonuclease H (159 aa).

An RNase H type-1 domain is found at 2–144 (SQDPVIIHTD…ADELATRGLQ (143 aa)). Asp-11, Glu-50, Asp-72, and Asp-136 together coordinate Mg(2+).

Belongs to the RNase H family. As to quaternary structure, monomer. Requires Mg(2+) as cofactor.

The protein localises to the cytoplasm. It catalyses the reaction Endonucleolytic cleavage to 5'-phosphomonoester.. Functionally, endonuclease that specifically degrades the RNA of RNA-DNA hybrids. This chain is Ribonuclease H, found in Mycolicibacterium smegmatis (strain ATCC 700084 / mc(2)155) (Mycobacterium smegmatis).